Here is a 591-residue protein sequence, read N- to C-terminus: Calnexin (591 aa).

An N-terminal signal peptide occupies residues 1–20 (MEGKWLLCLLLVLGTAAIQA). At 21-482 (HDGHDDDMID…QMLEAAEERP (462 aa)) the chain is on the lumenal side. Ser-75 and Asp-118 together coordinate Ca(2+). Lys-138 is subject to N6-acetyllysine. A disulfide bridge connects residues Cys-161 and Cys-195. Tyr-165, Lys-167, Tyr-186, and Asp-193 together coordinate an alpha-D-glucoside. Residues 261–347 (GNLLNDMTPP…EKPEDWDEDM (87 aa)) form a disordered region. Residues 275-320 (REIEDPEDRKPEDWDERPKIADPDAVKPDDWDEDAPSKIPDEEATK) show a composition bias toward basic and acidic residues. A p domain (Extended arm) region spans residues 277–410 (IEDPEDRKPE…RKIPNPDFFE (134 aa)). A run of 5 repeats spans residues 279–291 (DPED…WDER), 296–308 (DPDA…WDED), 315–327 (DEEA…WLDD), 334–346 (DPDA…WDED), and 349–359 (GEWEAPQIANP). 4 X approximate repeats stretches follow at residues 279-346 (DPED…WDED) and 349-406 (GEWE…IPNP). Positions 324-347 (WLDDEPEYIPDPDAEKPEDWDEDM) are enriched in acidic residues. Residues 327–360 (DEPEYIPDPDAEKPEDWDEDMDGEWEAPQIANPK) form an interaction with PPIB region. Cys-361 and Cys-367 are joined by a disulfide. A run of 3 repeats spans residues 368-378 (GVWQRPMIDNP), 382-392 (GKWKPPMIDNP), and 396-406 (GIWKPRKIPNP). Position 426 (Glu-426) interacts with an alpha-D-glucoside. Ca(2+) is bound at residue Asp-437. Residues 483–503 (WLWVVYILTVALPVFLVILFC) form a helical membrane-spanning segment. 2 S-palmitoyl cysteine lipidation sites follow: Cys-503 and Cys-504. The Cytoplasmic portion of the chain corresponds to 504 to 591 (CSGKKQSNAM…SPRNRKPRRE (88 aa)). The segment at 504–591 (CSGKKQSNAM…SPRNRKPRRE (88 aa)) is sufficient to mediate interaction with SGIP1. Residues 514 to 538 (EYKKTDAPQPDVKDEEGKEEEKNKG) show a composition bias toward basic and acidic residues. The segment at 514–591 (EYKKTDAPQP…SPRNRKPRRE (78 aa)) is disordered. Ser-553 is modified (phosphoserine). The segment covering 555–568 (AEEDGGTGSQDEED) has biased composition (acidic residues). The residue at position 561 (Thr-561) is a Phosphothreonine. Ser-563 carries the post-translational modification Phosphoserine; by MAPK3. At Ser-582 the chain carries Phosphoserine.

This sequence belongs to the calreticulin family. Interacts with MAPK3/ERK1. Interacts with KCNH2. Associates with ribosomes. Interacts with SGIP1; involved in negative regulation of endocytosis. The palmitoylated form interacts with the ribosome-translocon complex component SSR1, promoting efficient folding of glycoproteins. Interacts with SERPINA2P/SERPINA2 and with the S and Z variants of SERPINA1. Interacts with PPIB. Interacts with ZNRF4. Interacts with SMIM22. Interacts with TMX2. Interacts with TMEM35A/NACHO and CHRNA7. Interacts with reticulophagy regulators RETREG2 and RETREG3. Interacts with DNM1L; may form part of a larger protein complex at the ER-mitochondrial interface during mitochondrial fission. Interacts with ADAM7. In terms of processing, phosphorylated at Ser-563 by MAPK3/ERK1. Phosphorylation by MAPK3/ERK1 increases its association with ribosomes. Palmitoylation by DHHC6 leads to the preferential localization to the perinuclear rough ER. It mediates the association of calnexin with the ribosome-translocon complex (RTC) which is required for efficient folding of glycosylated proteins. Post-translationally, ubiquitinated, leading to proteasomal degradation. Probably ubiquitinated by ZNRF4.

It is found in the endoplasmic reticulum membrane. It localises to the mitochondrion membrane. Its subcellular location is the melanosome membrane. Calcium-binding protein that interacts with newly synthesized monoglucosylated glycoproteins in the endoplasmic reticulum. It may act in assisting protein assembly and/or in the retention within the ER of unassembled protein subunits. It seems to play a major role in the quality control apparatus of the ER by the retention of incorrectly folded proteins. Associated with partial T-cell antigen receptor complexes that escape the ER of immature thymocytes, it may function as a signaling complex regulating thymocyte maturation. Additionally it may play a role in receptor-mediated endocytosis at the synapse. This chain is Calnexin (Canx), found in Rattus norvegicus (Rat).